A 41-amino-acid chain; its full sequence is Replication-associated protein (41 aa).

Involved in viral RNA replication. This Potato leafroll virus (strain Potato/Scotland/strain 1/1984) (PLrV) protein is Replication-associated protein.